We begin with the raw amino-acid sequence, 78 residues long: UPF0154 protein lp_2061 (78 aa).

Residues 5–27 (TGIWILIVVIGVLVGLTGGFFGA) traverse the membrane as a helical segment.

Belongs to the UPF0154 family.

Its subcellular location is the membrane. The protein is UPF0154 protein lp_2061 of Lactiplantibacillus plantarum (strain ATCC BAA-793 / NCIMB 8826 / WCFS1) (Lactobacillus plantarum).